The primary structure comprises 510 residues: Glutamyl-tRNA(Gln) amidotransferase subunit A (510 aa).

Catalysis depends on charge relay system residues Lys-82 and Ser-157. The Acyl-ester intermediate role is filled by Ser-181.

The protein belongs to the amidase family. GatA subfamily. As to quaternary structure, heterotrimer of A, B and C subunits.

The enzyme catalyses L-glutamyl-tRNA(Gln) + L-glutamine + ATP + H2O = L-glutaminyl-tRNA(Gln) + L-glutamate + ADP + phosphate + H(+). Allows the formation of correctly charged Gln-tRNA(Gln) through the transamidation of misacylated Glu-tRNA(Gln) in organisms which lack glutaminyl-tRNA synthetase. The reaction takes place in the presence of glutamine and ATP through an activated gamma-phospho-Glu-tRNA(Gln). In Bordetella avium (strain 197N), this protein is Glutamyl-tRNA(Gln) amidotransferase subunit A.